We begin with the raw amino-acid sequence, 1497 residues long: Polyunsaturated fatty acid synthase subunit C (1497 aa).

2 dehydratase (DH) domain regions span residues 271-422 and 797-937; these read YKLC…DYGK and QGQY…RVRI. Positions 944–958 are enriched in low complexity; it reads ASSSASSVGSSASAE. The tract at residues 944–977 is disordered; sequence ASSSASSVGSSASAEVAERTRSKAAPQPVASGPA. The tract at residues 1026–1470 is enoylreductase (ER) domain; the sequence is LGDLGDRSFM…ILRGACYLRR (445 aa).

This sequence belongs to the thioester dehydratase family. FabA subfamily. Component of the polyunsaturated fatty acid synthase complex composed of at least ORF-A, ORF-B and ORF-C.

The protein operates within lipid metabolism; fatty acid biosynthesis. Polyketide synthase-like protein; part of the polyunsaturated fatty acid synthase composed of the 3 PKS-like subunits A, B and C. While the saturated fatty acids (SFAs) in Thraustochytrium are produced by the conventional fatty acid synthase (FAS) pathway, polyunsaturated fatty acids (PUFAs) including docosahexeanoic acid (DHA) and docosapentaenoic acid (DPA) are synthesized via an anaerobical PKS pathway. PUFA synthase assimilates fatty acyl-CoA, the product of FAS, as the starter unit to synthesize DPA, and this starter unit may be butyryl-CoA, hexanoyl-CoA, or octanoyl-CoA. DPA and DHA biosynthesis seem to differ by the reduction at the N-3 position by PUFA synthase, not the extension of carbon chain. In DHA biosynthesis, PUFA synthase extends the fatty acyl chain from the methyl toward the carboxyl end, and the double bond is formed when the carbon chain is growing, instead of afterward. Therefore, PUFA synthase is unable to transform DPA to DHA, suggesting that DPA is not the precursor of DHA. Moreover, DPA molecule is partly extended by FAS KS domain, so DPA biosynthesis is less dependent on PUFA synthase KS domain than DHA. The polypeptide is Polyunsaturated fatty acid synthase subunit C (Thraustochytrium sp. (strain ATCC 26185 / S-3)).